The sequence spans 417 residues: Serine--tRNA ligase (417 aa).

226–228 is an L-serine binding site; it reads TSE. ATP-binding positions include 257–259 and valine 273; that span reads RRE. Glutamate 280 provides a ligand contact to L-serine. 344–347 is an ATP binding site; that stretch reads ELTS. Threonine 379 is a binding site for L-serine.

This sequence belongs to the class-II aminoacyl-tRNA synthetase family. Type-1 seryl-tRNA synthetase subfamily. Homodimer. The tRNA molecule binds across the dimer.

Its subcellular location is the cytoplasm. The catalysed reaction is tRNA(Ser) + L-serine + ATP = L-seryl-tRNA(Ser) + AMP + diphosphate + H(+). It carries out the reaction tRNA(Sec) + L-serine + ATP = L-seryl-tRNA(Sec) + AMP + diphosphate + H(+). It functions in the pathway aminoacyl-tRNA biosynthesis; selenocysteinyl-tRNA(Sec) biosynthesis; L-seryl-tRNA(Sec) from L-serine and tRNA(Sec): step 1/1. In terms of biological role, catalyzes the attachment of serine to tRNA(Ser). Is also able to aminoacylate tRNA(Sec) with serine, to form the misacylated tRNA L-seryl-tRNA(Sec), which will be further converted into selenocysteinyl-tRNA(Sec). The chain is Serine--tRNA ligase from Mycobacterium sp. (strain KMS).